We begin with the raw amino-acid sequence, 575 residues long: Lysine--tRNA ligase (575 aa).

Residues Glu412 and Glu419 each contribute to the Mg(2+) site.

It belongs to the class-II aminoacyl-tRNA synthetase family. Homodimer. Mg(2+) serves as cofactor.

The protein resides in the cytoplasm. The catalysed reaction is tRNA(Lys) + L-lysine + ATP = L-lysyl-tRNA(Lys) + AMP + diphosphate. This Bacteroides fragilis (strain ATCC 25285 / DSM 2151 / CCUG 4856 / JCM 11019 / LMG 10263 / NCTC 9343 / Onslow / VPI 2553 / EN-2) protein is Lysine--tRNA ligase.